A 353-amino-acid chain; its full sequence is uncharacterized protein (353 aa).

The segment at 69 to 106 is disordered; the sequence is ISSATPSSTPPATRASSRLQPPKGHQAGGSNSQQQQPS. The span at 70-86 shows a compositional bias: low complexity; the sequence is SSATPSSTPPATRASSR. Positions 319-353 form a coiled coil; the sequence is GENKEKKMREMSRVYREMTRQMDDTRRDLDRLNQG.

This is an uncharacterized protein from Gibberella zeae (strain ATCC MYA-4620 / CBS 123657 / FGSC 9075 / NRRL 31084 / PH-1) (Wheat head blight fungus).